The primary structure comprises 395 residues: Probable beta-1,3-galactosyltransferase 8 (395 aa).

The helical; Signal-anchor for type II membrane protein transmembrane segment at 5-27 (AASGKAIIVLCLASFLAGSLFMS) threads the bilayer. A glycan (N-linked (GlcNAc...) asparagine) is linked at asparagine 117.

It belongs to the glycosyltransferase 31 family. Mn(2+) is required as a cofactor.

The protein resides in the golgi apparatus membrane. The protein operates within protein modification; protein glycosylation. Beta-1,3-galactosyltransferase that transfers galactose from UDP-galactose to substrates with a terminal glycosyl residue. The chain is Probable beta-1,3-galactosyltransferase 8 (B3GALT8) from Arabidopsis thaliana (Mouse-ear cress).